A 474-amino-acid chain; its full sequence is MSKKLLIKTWGCQMNEYDSSKMADLLNAANGYELTEEPEEADVLLLNTCSIREKAQEKVFHQLGRWKTLKDKKPGVVIGVGGCVATQEGDHIRERAPFVDVIFGPQTLHRLPEMIKQSQSEDAPVMDISFPEIEKFDSLPEPRAEGATAFVSIMEGCSKYCTYCVVPYTRGEEVSRPMDDVLYEIAQLAEQGVREVNLLGQNVNAYRGPMHDGEICSFAELLRLVASIDGIDRIRFTTSHPLEFTDDIIAVYEDTPELVSFLHLPVQSGSDRILTMMKRPHTGIEYKSIIRKLRKARPDIQISSDFIVGFPGETDKDFQDTMKLIKDVDFDMSFSFIFSPRPGTPAADYPCDLSEETKKERLYELQQQINAQAMRYSRLMLGTEQRVLVEGPSKKNLMELRARTENNRVVNFEGSADLIGQFVDVKITDVFANSLRGEIVRTEKDMDLRSVISPTQMMAKTRREDELGVATFTP.

Positions 3 to 120 (KKLLIKTWGC…LPEMIKQSQS (118 aa)) constitute an MTTase N-terminal domain. The [4Fe-4S] cluster site is built by Cys-12, Cys-49, Cys-83, Cys-157, Cys-161, and Cys-164. The region spanning 143–375 (RAEGATAFVS…QQQINAQAMR (233 aa)) is the Radical SAM core domain. The TRAM domain maps to 378 to 441 (RLMLGTEQRV…ANSLRGEIVR (64 aa)).

It belongs to the methylthiotransferase family. MiaB subfamily. Monomer. The cofactor is [4Fe-4S] cluster.

The protein localises to the cytoplasm. It catalyses the reaction N(6)-dimethylallyladenosine(37) in tRNA + (sulfur carrier)-SH + AH2 + 2 S-adenosyl-L-methionine = 2-methylsulfanyl-N(6)-dimethylallyladenosine(37) in tRNA + (sulfur carrier)-H + 5'-deoxyadenosine + L-methionine + A + S-adenosyl-L-homocysteine + 2 H(+). Catalyzes the methylthiolation of N6-(dimethylallyl)adenosine (i(6)A), leading to the formation of 2-methylthio-N6-(dimethylallyl)adenosine (ms(2)i(6)A) at position 37 in tRNAs that read codons beginning with uridine. The chain is tRNA-2-methylthio-N(6)-dimethylallyladenosine synthase from Vibrio vulnificus (strain YJ016).